Consider the following 252-residue polypeptide: MGRGRVEMKRIENKINRQVTFSKRRNGLLKKAYELSVLCDAEVALIIFSSRGKLYEFGSVGIESTIERYNRCYNCSLSNNKPEETTQSWCQEVTKLKSKYESLVRTNRNLLGEDLGEMGVKELQALERQLEAALTATRQRKTQVMMEEMEDLRKKERQLGDINKQLKIKFETEGHAFKTFQDLWANSAASVAGDPNNSEFPVEPSHPNVLDCNTEPFLQIGFQQHYYVQGEGSSVSKSNVAGETNFVQGWVL.

Positions Arg3–Phe57 constitute an MADS-box domain. Residues Thr86–Ala176 form the K-box domain. The stretch at Gln91–Glu173 forms a coiled coil.

Forms a heterodimer with AGAMOUS. Interacts with AGL15 and AGL16. As to expression, preferentially expressed in flowers.

The protein resides in the nucleus. Functionally, probable transcription factor. Forms a heterodimer via the K-box domain with AG, that could be involved in genes regulation during floral meristem development. This chain is Agamous-like MADS-box protein AGL6 (AGL6), found in Arabidopsis thaliana (Mouse-ear cress).